Consider the following 245-residue polypeptide: DNA repair protein RecO (245 aa).

The protein belongs to the RecO family.

Functionally, involved in DNA repair and RecF pathway recombination. This chain is DNA repair protein RecO, found in Anaplasma phagocytophilum (strain HZ).